A 57-amino-acid chain; its full sequence is MPIGPGSLAVIAIVALIIFGPKKLPELGKAAGDTLREFKNATKGLTSDEEEKKKEDQ.

Residues 1 to 21 (MPIGPGSLAVIAIVALIIFGP) form a helical membrane-spanning segment.

This sequence belongs to the TatA/E family. As to quaternary structure, forms a complex with TatCy. Two types of complexes exist: one composed of TatAy and TatCy, and another composed only of TatAy. Cytosolic TatA forms large complexes or aggregates.

The protein localises to the cell membrane. The protein resides in the cytoplasm. It is found in the cytosol. Functionally, part of the twin-arginine translocation (Tat) system that transports large folded proteins containing a characteristic twin-arginine motif in their signal peptide across membranes. TatA could form the protein-conducting channel of the Tat system. Required for YwbN secretion. The polypeptide is Sec-independent protein translocase protein TatAy (Bacillus subtilis (strain 168)).